Reading from the N-terminus, the 360-residue chain is Phospho-N-acetylmuramoyl-pentapeptide-transferase (360 aa).

The next 10 helical transmembrane spans lie at 27–47 (IVSL…LIAW), 72–92 (PTMG…MWAY), 94–114 (SNPY…VGFI), 132–152 (WKYF…YSIG), 168–188 (IMPQ…VGTS), 199–219 (GLAI…AWAT), 236–256 (AGEL…FLWF), 263–283 (VFMG…IAVL), 288–308 (FLLV…ILQV), and 338–358 (VIVR…ATLK).

Belongs to the glycosyltransferase 4 family. MraY subfamily. Mg(2+) serves as cofactor.

The protein resides in the cell inner membrane. The enzyme catalyses UDP-N-acetyl-alpha-D-muramoyl-L-alanyl-gamma-D-glutamyl-meso-2,6-diaminopimeloyl-D-alanyl-D-alanine + di-trans,octa-cis-undecaprenyl phosphate = di-trans,octa-cis-undecaprenyl diphospho-N-acetyl-alpha-D-muramoyl-L-alanyl-D-glutamyl-meso-2,6-diaminopimeloyl-D-alanyl-D-alanine + UMP. The protein operates within cell wall biogenesis; peptidoglycan biosynthesis. Catalyzes the initial step of the lipid cycle reactions in the biosynthesis of the cell wall peptidoglycan: transfers peptidoglycan precursor phospho-MurNAc-pentapeptide from UDP-MurNAc-pentapeptide onto the lipid carrier undecaprenyl phosphate, yielding undecaprenyl-pyrophosphoryl-MurNAc-pentapeptide, known as lipid I. The polypeptide is Phospho-N-acetylmuramoyl-pentapeptide-transferase (Yersinia pestis bv. Antiqua (strain Angola)).